The following is a 611-amino-acid chain: Glutamine--fructose-6-phosphate aminotransferase [isomerizing] (611 aa).

C2 serves as the catalytic Nucleophile; for GATase activity. The Glutamine amidotransferase type-2 domain maps to 2-219 (CGIVGAVAER…EGDIAEIRRD (218 aa)). 2 consecutive SIS domains span residues 287-427 (AAEL…VKGS) and 460-601 (VAEL…VDQP). K606 acts as the For Fru-6P isomerization activity in catalysis.

Homodimer.

Its subcellular location is the cytoplasm. It carries out the reaction D-fructose 6-phosphate + L-glutamine = D-glucosamine 6-phosphate + L-glutamate. Functionally, catalyzes the first step in hexosamine metabolism, converting fructose-6P into glucosamine-6P using glutamine as a nitrogen source. This Pseudomonas syringae pv. tomato (strain ATCC BAA-871 / DC3000) protein is Glutamine--fructose-6-phosphate aminotransferase [isomerizing].